A 1715-amino-acid polypeptide reads, in one-letter code: Protein PHYLLO, chloroplastic (1715 aa).

A chloroplast-targeting transit peptide spans 1–19 (MRSSFLVSNPPFLPSLIPR). Residues 20-273 (YSSRKSIRRS…EKSIFQVSSH (254 aa)) form an inactive isochorismate synthase region. The 2-succinyl-5-enolpyruvyl-6-hydroxy-3-cyclohexene-1-carboxylate synthase stretch occupies residues 363–933 (NAVWASAIIE…GTKSELEDAL (571 aa)). A helical membrane pass occupies residues 429-449 (AVIITSSGTAVSNLLPAVVEA). An O-succinylbenzoate synthase region spans residues 981-1364 (FLHPMIKNVL…SEDVMMNTLG (384 aa)). Lys-1170 acts as the Proton donor; for the o-succinylbenzoate synthase activity in catalysis. The Mg(2+) site is built by Asp-1202, Glu-1228, and Asp-1251. Lys-1279 serves as the catalytic Proton acceptor; for the o-succinylbenzoate synthase activity. Residues 1418 to 1715 (HFIRVHDVGE…QKLLLALKEM (298 aa)) form a 2-succinyl-6-hydroxy-2,4-cyclohexadiene-1-carboxylate synthase region. The 106-residue stretch at 1435–1540 (LFLHGFLGTG…EGAVVVSGSP (106 aa)) folds into the AB hydrolase-1 domain.

In the N-terminal section; belongs to the isochorismate synthase family. The protein in the 2nd section; belongs to the TPP enzyme family. MenD subfamily. This sequence in the 3rd section; belongs to the mandelate racemase/muconate lactonizing enzyme family. MenC type 1 subfamily. It in the C-terminal section; belongs to the AB hydrolase superfamily. MenH family. It depends on Mg(2+) as a cofactor. Requires Mn(2+) as cofactor. The cofactor is thiamine diphosphate.

It is found in the plastid. Its subcellular location is the chloroplast membrane. The enzyme catalyses isochorismate + 2-oxoglutarate + H(+) = 5-enolpyruvoyl-6-hydroxy-2-succinyl-cyclohex-3-ene-1-carboxylate + CO2. It carries out the reaction (1R,6R)-6-hydroxy-2-succinyl-cyclohexa-2,4-diene-1-carboxylate = 2-succinylbenzoate + H2O. The catalysed reaction is 5-enolpyruvoyl-6-hydroxy-2-succinyl-cyclohex-3-ene-1-carboxylate = (1R,6R)-6-hydroxy-2-succinyl-cyclohexa-2,4-diene-1-carboxylate + pyruvate. Functionally, multifunctional enzyme required for phylloquinone (vitamin K1) biosynthesis. The polypeptide is Protein PHYLLO, chloroplastic (PHYLLO) (Arabidopsis thaliana (Mouse-ear cress)).